The primary structure comprises 307 residues: Methionyl-tRNA formyltransferase (307 aa).

108-111 (SLLP) serves as a coordination point for (6S)-5,6,7,8-tetrahydrofolate.

It belongs to the Fmt family.

The catalysed reaction is L-methionyl-tRNA(fMet) + (6R)-10-formyltetrahydrofolate = N-formyl-L-methionyl-tRNA(fMet) + (6S)-5,6,7,8-tetrahydrofolate + H(+). Its function is as follows. Attaches a formyl group to the free amino group of methionyl-tRNA(fMet). The formyl group appears to play a dual role in the initiator identity of N-formylmethionyl-tRNA by promoting its recognition by IF2 and preventing the misappropriation of this tRNA by the elongation apparatus. In Xylella fastidiosa (strain 9a5c), this protein is Methionyl-tRNA formyltransferase.